Here is a 242-residue protein sequence, read N- to C-terminus: 1-(5-phosphoribosyl)-5-[(5-phosphoribosylamino)methylideneamino] imidazole-4-carboxamide isomerase (242 aa).

Residue Asp8 is the Proton acceptor of the active site. Asp129 (proton donor) is an active-site residue.

Belongs to the HisA/HisF family.

It localises to the cytoplasm. It carries out the reaction 1-(5-phospho-beta-D-ribosyl)-5-[(5-phospho-beta-D-ribosylamino)methylideneamino]imidazole-4-carboxamide = 5-[(5-phospho-1-deoxy-D-ribulos-1-ylimino)methylamino]-1-(5-phospho-beta-D-ribosyl)imidazole-4-carboxamide. Its pathway is amino-acid biosynthesis; L-histidine biosynthesis; L-histidine from 5-phospho-alpha-D-ribose 1-diphosphate: step 4/9. The chain is 1-(5-phosphoribosyl)-5-[(5-phosphoribosylamino)methylideneamino] imidazole-4-carboxamide isomerase from Clostridium botulinum (strain Kyoto / Type A2).